The sequence spans 391 residues: Probable sugar efflux transporter (391 aa).

12 helical membrane passes run 16-36 (VFVF…PVAL), 51-71 (VGLM…PLML), 82-102 (LLFL…AWNF), 110-130 (MGIA…VIRV), 138-158 (QALG…LPLG), 170-190 (TFGV…KLLP), 210-230 (PLLV…FTTY), 247-267 (ITTL…FLFG), 277-297 (FIAF…VFKN), 300-320 (WVIF…TIAL), 338-358 (IFSG…SIVI), and 361-381 (LGLE…LFWL).

Belongs to the major facilitator superfamily. SotB (TC 2.A.1.2) family.

The protein localises to the cell inner membrane. Involved in the efflux of sugars. The physiological role may be the reduction of the intracellular concentration of toxic sugars or sugar metabolites. The sequence is that of Probable sugar efflux transporter from Helicobacter pylori (strain J99 / ATCC 700824) (Campylobacter pylori J99).